Consider the following 98-residue polypeptide: DNA-binding protein Fis (98 aa).

Positions 74-93 form a DNA-binding region, H-T-H motif; that stretch reads QTRAATMMGINRGTLRKKLK.

Belongs to the transcriptional regulatory Fis family. In terms of assembly, homodimer.

In terms of biological role, activates ribosomal RNA transcription. Plays a direct role in upstream activation of rRNA promoters. The sequence is that of DNA-binding protein Fis from Photobacterium profundum (strain SS9).